The primary structure comprises 236 residues: MPPKKTETKAADASAAAAPAPAAAPTSAPKTKSPSTHASYLDMITDAIVALKDRAGSSRQALKKYVRANNTLGNVTDNMFDSLFNKALKNGVDKGVFEQPKGPSGGTKLAKKVAKPAPKKAAPKKETKEKKPAAAKKEGAAKKETKEKKAPAAKKAAAPKKAAAPKKEVKEKKAAAPKKKAAAPAVADKETVLTKTKSGRVAKSTAKPAAAKKAAAPKKAAASKKAEKAEPAAEKA.

Positions methionine 1–alanine 10 are enriched in basic and acidic residues. Disordered regions lie at residues methionine 1–threonine 36 and lysine 94–alanine 236. Residues alanine 11 to threonine 36 are compositionally biased toward low complexity. In terms of domain architecture, H15 spans threonine 36–lysine 111. The span at leucine 109–alanine 122 shows a compositional bias: basic residues. A compositionally biased stretch (basic and acidic residues) spans proline 123–alanine 150. The segment covering alanine 153–alanine 162 has biased composition (low complexity). Residues proline 165–alanine 174 are compositionally biased toward basic and acidic residues. A compositionally biased stretch (low complexity) spans alanine 202–alanine 220. Residues lysine 224–alanine 236 show a composition bias toward basic and acidic residues.

This sequence belongs to the histone H1/H5 family.

Its subcellular location is the nucleus. It localises to the chromosome. In terms of biological role, could act as an H1-type linker histone. The sequence is that of Histone H1 (hH1) from Neurospora crassa (strain ATCC 24698 / 74-OR23-1A / CBS 708.71 / DSM 1257 / FGSC 987).